The primary structure comprises 40 residues: Photosystem II reaction center protein J (40 aa).

Residues 8–28 traverse the membrane as a helical segment; that stretch reads IPLWLIGTVAGILIIGLLGVF.

The protein belongs to the PsbJ family. As to quaternary structure, PSII is composed of 1 copy each of membrane proteins PsbA, PsbB, PsbC, PsbD, PsbE, PsbF, PsbH, PsbI, PsbJ, PsbK, PsbL, PsbM, PsbT, PsbX, PsbY, PsbZ, Psb30/Ycf12, at least 3 peripheral proteins of the oxygen-evolving complex and a large number of cofactors. It forms dimeric complexes.

The protein resides in the plastid. The protein localises to the chloroplast thylakoid membrane. Its function is as follows. One of the components of the core complex of photosystem II (PSII). PSII is a light-driven water:plastoquinone oxidoreductase that uses light energy to abstract electrons from H(2)O, generating O(2) and a proton gradient subsequently used for ATP formation. It consists of a core antenna complex that captures photons, and an electron transfer chain that converts photonic excitation into a charge separation. The polypeptide is Photosystem II reaction center protein J (Nandina domestica (Heavenly bamboo)).